A 157-amino-acid chain; its full sequence is uncharacterized protein (157 aa).

One can recognise an N-acetyltransferase domain in the interval 9 to 154 (LLINYKTLDE…ETNLNAVTNE (146 aa)).

This is an uncharacterized protein from Bacillus cereus (strain G9842).